Reading from the N-terminus, the 394-residue chain is Argininosuccinate synthase (394 aa).

ATP is bound by residues 7 to 15 and Ala-34; that span reads AYSGGLDTS. L-citrulline-binding residues include Tyr-85 and Ser-90. Gly-115 lines the ATP pocket. 3 residues coordinate L-aspartate: Thr-117, Asn-121, and Asp-122. Position 121 (Asn-121) interacts with L-citrulline. Residues Arg-125, Ser-176, Ser-185, Glu-261, and Tyr-273 each coordinate L-citrulline.

Belongs to the argininosuccinate synthase family. Type 1 subfamily. In terms of assembly, homotetramer.

It is found in the cytoplasm. The enzyme catalyses L-citrulline + L-aspartate + ATP = 2-(N(omega)-L-arginino)succinate + AMP + diphosphate + H(+). It participates in amino-acid biosynthesis; L-arginine biosynthesis; L-arginine from L-ornithine and carbamoyl phosphate: step 2/3. This chain is Argininosuccinate synthase, found in Ehrlichia ruminantium (strain Gardel).